A 315-amino-acid polypeptide reads, in one-letter code: Shiga-like toxin 1 subunit A (315 aa).

The first 22 residues, 1-22, serve as a signal peptide directing secretion; sequence MKIIIFRVLTFFFVIFSVNVVA. The interval 23–273 is A1; the sequence is KEFTLDFSTA…CHHHASRVAR (251 aa). The active site involves Glu-189. Cysteines 264 and 283 form a disulfide. Residues 274–315 are A2; it reads MASDEFPSMCPADGRVRGITHNKILWDSSTLGAILMRRTISS.

The protein belongs to the ribosome-inactivating protein family. As to quaternary structure, shiga-like toxin contains a single subunit A and five copies of subunit B.

It localises to the secreted. It carries out the reaction Endohydrolysis of the N-glycosidic bond at one specific adenosine on the 28S rRNA.. The A subunit is responsible for inhibiting protein synthesis through the catalytic inactivation of 60S ribosomal subunits. After endocytosis, the A subunit is cleaved by furin in two fragments, A1 and A2: A1 is the catalytically active fragment, and A2 is essential for holotoxin assembly with the B subunits. This Escherichia coli (Bacteriophage H19B) protein is Shiga-like toxin 1 subunit A (stxA).